The primary structure comprises 100 residues: UPF0213 protein YhbQ (100 aa).

In terms of domain architecture, GIY-YIG spans 2–77 (TPWFLYLIRT…KQLTKRQKER (76 aa)).

This sequence belongs to the UPF0213 family.

The chain is UPF0213 protein YhbQ from Escherichia coli (strain K12 / MC4100 / BW2952).